A 390-amino-acid polypeptide reads, in one-letter code: Elongation factor Tu 1 (390 aa).

The tr-type G domain occupies 10-201; that stretch reads KPHVNVGTIG…LDEYVAVPPR (192 aa). The tract at residues 19–26 is G1; the sequence is GHVDHGKT. 19–26 lines the GTP pocket; it reads GHVDHGKT. Thr26 is a Mg(2+) binding site. Residues 55–59 form a G2 region; that stretch reads GITIA. Residues 76–79 form a G3 region; sequence DCPG. GTP contacts are provided by residues 76-80 and 131-134; these read DCPGH and NKAD. The G4 stretch occupies residues 131–134; sequence NKAD. Positions 168 to 170 are G5; that stretch reads SAL.

It belongs to the TRAFAC class translation factor GTPase superfamily. Classic translation factor GTPase family. EF-Tu/EF-1A subfamily. Monomer.

Its subcellular location is the cytoplasm. The catalysed reaction is GTP + H2O = GDP + phosphate + H(+). Functionally, GTP hydrolase that promotes the GTP-dependent binding of aminoacyl-tRNA to the A-site of ribosomes during protein biosynthesis. In Wolbachia pipientis wMel, this protein is Elongation factor Tu 1.